Here is an 877-residue protein sequence, read N- to C-terminus: MKTSEIRKKFLDFFASKGHQVVPSSSLIPGNDPTLMFTVAGMVQFKDVFLGFEKRDYTRATTSQKCLRAGGKHNDLENVGYTARHHTFFEMLGNFSFGDYFKRDAITFAWEFLTGEQWLALPKDKLMVTVYATDDEAYDIWHQTVGLPADKIVRIGDNKGAPYASDNFWTMGDTGPCGPCTEIFFDHGPSVAGGPPGSPDEDGDRFMEIWNNVFMQFNRDEAGTLHPLPKPSVDTGMGLERLSTVLQHVKSNYETDALACLVRAAARETGVEYSQDVPSLKVIADHIRACSFMVADGILPSNEGRGYVLRRIARRAIRHGYKLGQKGLFFHKIVADLVAEMGEAYPELREKQAHIEDALRAEEIKFAETLEIGMGLVDSALEGGKTALDGDTIFKLYDTFGFPVDLTADICRERGIHADLEGFERAMEAQRERGRAGSNFKMSGKIAYDGEDTRFHGYDKSSVEAKVLALYKGTDPVDSLSAGDEGIVVLDGTAFYAEGGGQVGDVGEISAAGGIAALFDVADTQKIQGAAFGHKGKLARGALKVGDAVTATIDLHQRQASARNHSATHLLHAALRHVLGGHVVQKGSLVNPERTRFDFAHGEAVTAAQIAELERVVNHVIAANYEVKAELMSMEAAQKSGAMMLFGEKYGDEVRVLTMGDFSAELCGGTHVKRTGDIGLFKIVAEGGVAAGVRRIEAVTGEGALAYIQAQDALIKEAAAALKAQTSDEVLAKIAALQDSAKALEKELAKLKGQLASSAGDSLADAAADINGVKVLAAELPGADNTALRETLDKLKDKLGSAAIVLAAKGDGKVALVAGVTADLTGKLKAGELVNFVAQQVGGKGGGRPDMAQAGGTQPENLDAALNGVQAWVAGKL.

Zn(2+) is bound by residues H565, H569, C667, and H671.

Belongs to the class-II aminoacyl-tRNA synthetase family. The cofactor is Zn(2+).

The protein resides in the cytoplasm. The catalysed reaction is tRNA(Ala) + L-alanine + ATP = L-alanyl-tRNA(Ala) + AMP + diphosphate. Its function is as follows. Catalyzes the attachment of alanine to tRNA(Ala) in a two-step reaction: alanine is first activated by ATP to form Ala-AMP and then transferred to the acceptor end of tRNA(Ala). Also edits incorrectly charged Ser-tRNA(Ala) and Gly-tRNA(Ala) via its editing domain. The polypeptide is Alanine--tRNA ligase (Chromobacterium violaceum (strain ATCC 12472 / DSM 30191 / JCM 1249 / CCUG 213 / NBRC 12614 / NCIMB 9131 / NCTC 9757 / MK)).